The primary structure comprises 1614 residues: Chitin synthase csmA (1614 aa).

The interval 1-22 (MAGPAPSGRTPSHAQSSLPSLP) is disordered. In terms of domain architecture, Myosin motor spans 1–788 (MAGPAPSGRT…CWADLAKLGE (788 aa)). Residues 9–19 (RTPSHAQSSLP) are compositionally biased toward polar residues. Residue 105 to 112 (GESGSGKT) coordinates ATP. Residues 600-650 (QVSSKPMRMPSMARRKAGPSRLAFDAPEGDDQDEYDSQAGSMSKSSARRKS) form a disordered region. Positions 626 to 635 (PEGDDQDEYD) are enriched in acidic residues. The segment at 668–692 (LDIVSKCLNSANLNPYFVFCLKPND) is actin-binding. Transmembrane regions (helical) follow at residues 898 to 918 (WMAI…KTFG) and 937 to 957 (LIIW…PGLI). Positions 961 to 1020 (QHVYSTAELSSHNGKDGHNSFVAIRGIVFNLDKFMPSHYPDIVPEKSLKKYAGTDATGLF) constitute a Cytochrome b5 heme-binding domain. Asparagine 1047 and asparagine 1072 each carry an N-linked (GlcNAc...) asparagine glycan. A helical membrane pass occupies residues 1209–1229 (FILAISIFICLIVVFKFLAAL). N-linked (GlcNAc...) asparagine glycosylation is present at asparagine 1572.

In the N-terminal section; belongs to the TRAFAC class myosin-kinesin ATPase superfamily. Myosin family. The protein in the C-terminal section; belongs to the chitin synthase family. Class V subfamily.

The protein localises to the cell membrane. Its subcellular location is the cell septum. It is found in the cell tip. The catalysed reaction is [(1-&gt;4)-N-acetyl-beta-D-glucosaminyl](n) + UDP-N-acetyl-alpha-D-glucosamine = [(1-&gt;4)-N-acetyl-beta-D-glucosaminyl](n+1) + UDP + H(+). Its function is as follows. Polymerizes chitin, a structural polymer of the cell wall and septum, by transferring the sugar moiety of UDP-GlcNAc to the non-reducing end of the growing chitin polymer. Acts as the major chitin synthase in Aspergillus niger involved in cell wall integrity which is principally responsible for chitin synthesis at the lateral cell wall. Plays an important role in septal growth or maintenance. Mediates colony spore formation. This chain is Chitin synthase csmA, found in Aspergillus niger (strain ATCC MYA-4892 / CBS 513.88 / FGSC A1513).